We begin with the raw amino-acid sequence, 537 residues long: Multidrug resistance protein Stp (537 aa).

The next 14 membrane-spanning stretches (helical) occupy residues 6-26, 46-66, 77-97, 104-124, 136-156, 163-183, 200-220, 223-243, 262-282, 300-320, 327-347, 352-372, 397-417, and 478-498; these read LLTLIATGLGLFMIFLDALIV, WVVASYSLGMAVFIMSAATLA, IGVSLFTLGSIACGLAPSIAV, AQGLGAAAVSVTSLALVSAAF, IWTAIASIGTTTGPTLGGLLV, SIFYVNLPMGALVLFLTLCYV, LLFIVAVGALVYAVIEGPQIG, SVQTIVMLWTAAVGCALFVWL, YALAIATICTVFFAVYGMLLL, LMILPFSAAVAIVSPLVGHLV, VPILAGLCMLMLGLLMLIFSE, ALVLVGLGLCGSGVALCLTPI, AIGSTIGFAVLGSVLAAWLSA, and VALLVATATLAVVFLAGWRWF.

Belongs to the major facilitator superfamily. EmrB family.

The protein resides in the cell membrane. This is Multidrug resistance protein Stp (stp) from Mycobacterium tuberculosis (strain CDC 1551 / Oshkosh).